Here is a 367-residue protein sequence, read N- to C-terminus: MFNLLPAFSLGVLLIVMEGRGSAVNTPASRPVTRKSKSYGRSCVEAPSYFWQTPGHLTVLKVPTSRGAAKSQIITNKVDPEHIALLVKNEWKLSYVTPLHHFRHTQLKSYAKHLSAFIVAEKQQGVAVEVGLDAGFKVTFTAVLGLAETDEDAETVFIQIQSKPVFAAAADAPKVVWRGWLTCVNGDPEYLRSLPPDFVSLPLFCTSGPESLTNLVKSWFERAFDCNFGSLALNSSTLNWLAALWTGCHPACNIRYLKLSWSLPTEPPLDVLYTVNPQDAWELWNSIHPQENTDDRIDIKDVQAFMSGMETHFFRHFKIHLSAGTLLKVSTALGSAHHDGKIKIGNSDYITTLLALLTECALLKMPT.

Belongs to the CENP-L/IML3 family.

It is found in the nucleus. The protein localises to the chromosome. It localises to the centromere. In terms of biological role, probable component of a centromeric complex involved in assembly of kinetochore proteins, mitotic progression and chromosome segregation. The polypeptide is Centromere protein L (cenpl) (Danio rerio (Zebrafish)).